Here is a 122-residue protein sequence, read N- to C-terminus: Large ribosomal subunit protein uL14 (122 aa).

It belongs to the universal ribosomal protein uL14 family. As to quaternary structure, part of the 50S ribosomal subunit. Forms a cluster with proteins L3 and L19. In the 70S ribosome, L14 and L19 interact and together make contacts with the 16S rRNA in bridges B5 and B8.

Its function is as follows. Binds to 23S rRNA. Forms part of two intersubunit bridges in the 70S ribosome. The chain is Large ribosomal subunit protein uL14 from Campylobacter hominis (strain ATCC BAA-381 / DSM 21671 / CCUG 45161 / LMG 19568 / NCTC 13146 / CH001A).